Reading from the N-terminus, the 302-residue chain is uncharacterized protein (302 aa).

3 disordered regions span residues 81 to 100, 155 to 209, and 269 to 302; these read ETSDWDSPASPPVTGAERAA, TVTG…PVNP, and LRIESGSSPGKRPLDDPDEVPSSKRGPSRRALLN. Residues 196–209 show a composition bias toward low complexity; that stretch reads PSLPSSLVSSPVNP.

This is an uncharacterized protein from Ictalurid herpesvirus 1 (strain Auburn) (IcHV-1).